A 373-amino-acid polypeptide reads, in one-letter code: Ribosomal RNA small subunit methyltransferase H (373 aa).

S-adenosyl-L-methionine is bound by residues 92-94 (GGH), aspartate 111, tyrosine 138, aspartate 159, and glutamine 166. Composition is skewed to basic and acidic residues over residues 343-355 (AERA…ERNP) and 363-373 (RALEKVGGRGS). The tract at residues 343–373 (AERADEQEIERNPRSAPVRLRALEKVGGRGS) is disordered.

The protein belongs to the methyltransferase superfamily. RsmH family.

It localises to the cytoplasm. It catalyses the reaction cytidine(1402) in 16S rRNA + S-adenosyl-L-methionine = N(4)-methylcytidine(1402) in 16S rRNA + S-adenosyl-L-homocysteine + H(+). In terms of biological role, specifically methylates the N4 position of cytidine in position 1402 (C1402) of 16S rRNA. In Mycolicibacterium smegmatis (strain ATCC 700084 / mc(2)155) (Mycobacterium smegmatis), this protein is Ribosomal RNA small subunit methyltransferase H.